Here is a 334-residue protein sequence, read N- to C-terminus: Spermidine synthase 1 (334 aa).

The tract at residues 1-37 (MAAPENTLHSTDSPLKRQREDEVNGVSDTLSKEPQPN) is disordered. Over residues 26-37 (VSDTLSKEPQPN) the composition is skewed to polar residues. Residues 44–281 (PGWFSEISPM…GMIGFMLCST (238 aa)) form the PABS domain. Glutamine 75 contributes to the S-adenosyl 3-(methylsulfanyl)propylamine binding site. Tyrosine 105 contributes to the putrescine binding site. Residues glutamine 106, aspartate 130, glutamate 150, 181–182 (DG), and aspartate 200 each bind S-adenosyl 3-(methylsulfanyl)propylamine. Aspartate 200 functions as the Proton acceptor in the catalytic mechanism. Residues 200–203 (DSSD) and tyrosine 269 contribute to the putrescine site.

The protein belongs to the spermidine/spermine synthase family.

The catalysed reaction is S-adenosyl 3-(methylsulfanyl)propylamine + putrescine = S-methyl-5'-thioadenosine + spermidine + H(+). It participates in amine and polyamine biosynthesis; spermidine biosynthesis; spermidine from putrescine: step 1/1. In Pisum sativum (Garden pea), this protein is Spermidine synthase 1 (SPDSYN1).